A 117-amino-acid polypeptide reads, in one-letter code: Zinc metalloproteinase/disintegrin (117 aa).

One can recognise a Disintegrin domain in the interval 36-117; the sequence is TPVSGNELLE…AGCPRNPFHA (82 aa). Disulfide bonds link Cys-50–Cys-65, Cys-52–Cys-60, Cys-59–Cys-82, Cys-73–Cys-79, Cys-78–Cys-103, and Cys-91–Cys-110. A Cell attachment site motif is present at residues 95 to 97; it reads RGD.

This sequence belongs to the venom metalloproteinase (M12B) family. P-II subfamily. P-IIa sub-subfamily. In terms of assembly, monomer. The cofactor is Zn(2+). As to expression, expressed by the venom gland.

The protein localises to the secreted. Its function is as follows. Impairs hemostasis in the envenomed animal. In terms of biological role, inhibits platelet aggregation and bone resorption. The sequence is that of Zinc metalloproteinase/disintegrin from Gloydius halys (Chinese water mocassin).